The sequence spans 380 residues: Queuine tRNA-ribosyltransferase (380 aa).

D96 acts as the Proton acceptor in catalysis. Residues 96-100, D150, Q193, and G220 contribute to the substrate site; that span reads DSGGF. Residues 251–257 are RNA binding; the sequence is GVGAPDS. Catalysis depends on D270, which acts as the Nucleophile. Residues 275-279 are RNA binding; important for wobble base 34 recognition; sequence TRIAR. Zn(2+) contacts are provided by C308, C310, C313, and H339.

This sequence belongs to the queuine tRNA-ribosyltransferase family. Homodimer. Within each dimer, one monomer is responsible for RNA recognition and catalysis, while the other monomer binds to the replacement base PreQ1. Requires Zn(2+) as cofactor.

The enzyme catalyses 7-aminomethyl-7-carbaguanine + guanosine(34) in tRNA = 7-aminomethyl-7-carbaguanosine(34) in tRNA + guanine. The protein operates within tRNA modification; tRNA-queuosine biosynthesis. Catalyzes the base-exchange of a guanine (G) residue with the queuine precursor 7-aminomethyl-7-deazaguanine (PreQ1) at position 34 (anticodon wobble position) in tRNAs with GU(N) anticodons (tRNA-Asp, -Asn, -His and -Tyr). Catalysis occurs through a double-displacement mechanism. The nucleophile active site attacks the C1' of nucleotide 34 to detach the guanine base from the RNA, forming a covalent enzyme-RNA intermediate. The proton acceptor active site deprotonates the incoming PreQ1, allowing a nucleophilic attack on the C1' of the ribose to form the product. After dissociation, two additional enzymatic reactions on the tRNA convert PreQ1 to queuine (Q), resulting in the hypermodified nucleoside queuosine (7-(((4,5-cis-dihydroxy-2-cyclopenten-1-yl)amino)methyl)-7-deazaguanosine). This Streptococcus pyogenes serotype M1 protein is Queuine tRNA-ribosyltransferase.